A 368-amino-acid polypeptide reads, in one-letter code: COP9 signalosome complex subunit 5 (368 aa).

The MPN domain maps to 56 to 193 (IKISAIALLK…IGAFRTYPEG (138 aa)). Residues His139, His141, and Asp152 each contribute to the Zn(2+) site. The short motif at 139–152 (HSHPGYGCWLSGID) is the JAMM motif element. The disordered stretch occupies residues 347–368 (TEPEKAGPSPSAPEPAVEMADA).

Belongs to the peptidase M67A family. CSN5 subfamily. As to quaternary structure, component of the CSN complex, probably composed of csn-1, csn-2, csn-3, csn-4, csn-5, csn-6 and csn-7. Within the complex it probably interacts directly with csn-1. Interacts with glh-1 and glh-3. Interacts with lag-1. Interacts with kgb-1. A divalent metal cation is required as a cofactor.

Its subcellular location is the cytoplasm. The protein resides in the nucleus. In terms of biological role, probable protease subunit of the COP9 signalosome complex (CSN), a complex involved in various cellular and developmental processes. The CSN complex is an essential regulator of the ubiquitin (Ubl) conjugation pathway by mediating the deneddylation of the cullin subunits of the SCF-type E3 ligase complexes, leading to decrease the Ubl ligase activity of SCF. In the complex, it probably acts as the catalytic center that mediates the cleavage of Nedd8 from cullins. It however has no metalloprotease activity by itself and requires the other subunits of the CSN complex. The CSN complex plays an essential role in embryogenesis and oogenesis and is required to regulate microtubule stability in the early embryo. Mediates mei-3/katanin targeting for degradation at the meiosis to mitosis transition via deneddylation of cul-3. May stabilize glh-1 protein levels by antagonizing kgb-1. This is COP9 signalosome complex subunit 5 (csn-5) from Caenorhabditis elegans.